The chain runs to 389 residues: MADGSKVFKKTSPDGKITVYLAKRDYVDHVEFVEPVDGMIVIDPEYQKEKKVFVMMTCAFRYGRDDMELIGLSFRKDIYVQSCQVHPPLPGEKKALTPLQEKLKAKLGGNSFPFSFNMATNLPCSVTLQPGPEDSGKACGVDFEVKGFWGDDVEEKNSKKNVARLIIRKVQYAPETSGAAPHAEITKQFMMSDKPLQLEASLNKEIHYHGEPIIVNVKINNSTNKIVKKIKITVEQITDVVLYSLDKYTKVVCCEEMNDTVAANSAFTKAYQVTPLLANNREKRGLALDGKLKHGDTNLASSTTLRPGMDKEVMGILVSYKIRVNLMASRGGILGDLISSDVSVELPLILMHPKPAEGTTSAEDVVIEEFARQKLQGEQDDEEDKEEAS.

Belongs to the arrestin family. Retina and pineal gland.

Functionally, may play a role in an as yet undefined retina-specific signal transduction. Could bind to photoactivated-phosphorylated red/green opsins. The polypeptide is Arrestin-C (arr3) (Aquarana catesbeiana (American bullfrog)).